Here is an 85-residue protein sequence, read N- to C-terminus: CRISPR-associated endoribonuclease Cas2 (85 aa).

A Mg(2+)-binding site is contributed by Asp-8.

The protein belongs to the CRISPR-associated endoribonuclease Cas2 protein family. In terms of assembly, homodimer, forms a heterotetramer with a Cas1 homodimer. The cofactor is Mg(2+).

In terms of biological role, CRISPR (clustered regularly interspaced short palindromic repeat), is an adaptive immune system that provides protection against mobile genetic elements (viruses, transposable elements and conjugative plasmids). CRISPR clusters contain sequences complementary to antecedent mobile elements and target invading nucleic acids. CRISPR clusters are transcribed and processed into CRISPR RNA (crRNA). Functions as a ssRNA-specific endoribonuclease. Involved in the integration of spacer DNA into the CRISPR cassette. This chain is CRISPR-associated endoribonuclease Cas2, found in Thermococcus kodakarensis (strain ATCC BAA-918 / JCM 12380 / KOD1) (Pyrococcus kodakaraensis (strain KOD1)).